The primary structure comprises 153 residues: Small ribosomal subunit protein uS13 (153 aa).

It belongs to the universal ribosomal protein uS13 family.

Its subcellular location is the cytoplasm. Functionally, located at the top of the head of the 40S subunit, it contacts several helices of the 18S rRNA. This is Small ribosomal subunit protein uS13 (RPS18) from Chlamydomonas reinhardtii (Chlamydomonas smithii).